The sequence spans 113 residues: Large ribosomal subunit protein uL22 (113 aa).

It belongs to the universal ribosomal protein uL22 family. In terms of assembly, part of the 50S ribosomal subunit.

Its function is as follows. This protein binds specifically to 23S rRNA; its binding is stimulated by other ribosomal proteins, e.g. L4, L17, and L20. It is important during the early stages of 50S assembly. It makes multiple contacts with different domains of the 23S rRNA in the assembled 50S subunit and ribosome. In terms of biological role, the globular domain of the protein is located near the polypeptide exit tunnel on the outside of the subunit, while an extended beta-hairpin is found that lines the wall of the exit tunnel in the center of the 70S ribosome. The chain is Large ribosomal subunit protein uL22 from Roseiflexus castenholzii (strain DSM 13941 / HLO8).